The primary structure comprises 92 residues: Small ribosomal subunit protein uS19 (92 aa).

The protein belongs to the universal ribosomal protein uS19 family.

In terms of biological role, protein S19 forms a complex with S13 that binds strongly to the 16S ribosomal RNA. The chain is Small ribosomal subunit protein uS19 from Enterococcus faecalis (strain ATCC 700802 / V583).